Here is a 784-residue protein sequence, read N- to C-terminus: Toll-like receptor 2 (784 aa).

The signal sequence occupies residues 1-20; it reads MPRALWTAWVWAVIILSTEG. Over 21 to 587 the chain is Extracellular; that stretch reads ASDQASSLSC…ARLSLSECHR (567 aa). C30 and C36 form a disulfide bridge. LRR repeat units follow at residues 54–77, 78–101, 102–125, 126–150, 151–175, 176–199, 200–223, 224–250, 251–278, 279–308, 309–337, 338–361, 362–388, 389–414, 415–437, 438–457, 458–478, 479–500, and 501–524; these read VKSLDLSNNEITYVSNRDLQRCVN, LKTLRLGANEIHTVEEDSFFHLRN, LEYLDLSYNRLSNLSSSWFRSLYV, LKFLNLLGNLYKTLGETSLFSHLPN, LRTLKVGNSNSFTEIHEKDFTGLTF, LEELEISAQNLQIYVPKSLKSIQN, ISHLILHLKQPVLLVDILVDIVSS, LDCLELRDTNLHTFHFSEASISEMSTS, VKKLIFRNVQFTDESFVEVVKLFNYVSG, ILEVEFDDCTHDGIGDFRALSLDRIRHLGN, VETLTIRKLHIPQFFLFQDLSSIYPLTGK, VKRVTIENSKVFLVPCLLSQHLKS, LEYLDLSENLMSEETLKNSACKDAWPF, LQTLVLRQNRLKSLEKXGELLLTLEN, LNSLDISKNNFLSMPETCQWPGK, MKQLNLSSTRIHSLTQCLPQ, TLEILDVSNNNLDSFSLILPQ, LKELYISRNKLKTLPDASFLPV, and LXVMRISRNIINTFSKEQLDSFQQ. The N-linked (GlcNAc...) asparagine glycan is linked to N114. N199 carries an N-linked (GlcNAc...) asparagine glycan. An intrachain disulfide couples C353 to C382. C432 and C454 are oxidised to a cystine. Residue N442 is glycosylated (N-linked (GlcNAc...) asparagine). Residues 525 to 579 form the LRRCT domain; that stretch reads LKTLEAGGNNFICSCDFLSFTQGQQALGRVLVDWPDDYHCDSPSHVRGQRVQDAR. The chain crosses the membrane as a helical span at residues 588-608; the sequence is AAVVSAACCALFLLLLLMGVL. Over 609–784 the chain is Cytoplasmic; the sequence is CHRFHGLWYM…WLNLRAAIRS (176 aa). A TIR domain is found at 639-782; it reads ICYDAFVSYS…GFWLNLRAAI (144 aa). Residue K754 forms a Glycyl lysine isopeptide (Lys-Gly) (interchain with G-Cter in ubiquitin) linkage. Positions 761 to 778 match the ATG16L1-binding motif motif; the sequence is YLEWPVDETQQEGFWLNL.

The protein belongs to the Toll-like receptor family. As to quaternary structure, interacts with LY96, TLR1 and TLR6 (via extracellular domain). TLR2 seems to exist in heterodimers with either TLR1 or TLR6 before stimulation by the ligand. The heterodimers form bigger oligomers in response to their corresponding ligands as well as further heterotypic associations with other receptors such as CD14 and/or CD36. Binds MYD88 (via TIR domain). Interacts with TICAM1. Interacts with CNPY3. Interacts with ATG16L1. Interacts with PPP1R11. Interacts with TICAM2. Interacts with TIRAP. Ubiquitinated at Lys-754 by PPP1R11, leading to its degradation. Deubiquitinated by USP2. In terms of processing, glycosylation of Asn-442 is critical for secretion of the N-terminal ectodomain of TLR2.

The protein resides in the membrane. Its subcellular location is the cytoplasmic vesicle. The protein localises to the phagosome membrane. It is found in the membrane raft. Functionally, cooperates with LY96 to mediate the innate immune response to bacterial lipoproteins and other microbial cell wall components. Cooperates with TLR1 or TLR6 to mediate the innate immune response to bacterial lipoproteins or lipopeptides. Acts via MYD88 and TRAF6, leading to NF-kappa-B activation, cytokine secretion and the inflammatory response. May also promote apoptosis in response to lipoproteins. Forms activation clusters composed of several receptors depending on the ligand, these clusters trigger signaling from the cell surface and subsequently are targeted to the Golgi in a lipid-raft dependent pathway. Forms the cluster TLR2:TLR6:CD14:CD36 in response to diacylated lipopeptides and TLR2:TLR1:CD14 in response to triacylated lipopeptides. The chain is Toll-like receptor 2 (TLR2) from Bos indicus (Zebu).